The sequence spans 99 residues: Protein Frey (99 aa).

Residues 7–29 (GALYPRAGLSLFLLYLVLAAVLL) traverse the membrane as a helical segment. Residues 65–88 (PKHPWPRGPRPLLSRAQQRKRDGP) are disordered.

In terms of assembly, interacts with SPPL2C (via active sites); the interaction stabilizes FREY1 protein and inhibits SPPL2C proteolytic activity. Interacts with IZUMO1; the interaction retains IZUMO1 at the endoplasmic reticulum membrane and coordinates IZUMO1 complex assembly.

The protein localises to the endoplasmic reticulum membrane. In terms of biological role, key regulator for male fertility expressed transiently in round spermatids where it recruits IZUMO1 at the endoplasmic reticulum (ER) membrane and coordinates the oolemmal binding multimeric complex (IZUMO1 complex) assembly. Upon complete assembly of the IZUMO1 complex, its ER retention is released, facilitating IZUMO1 complex export to the acrosome. Through the interaction with SPPL2C, inhibits its intramembrane protease activity directly accessing the catalytic center of an I-CLiP. This Ailuropoda melanoleuca (Giant panda) protein is Protein Frey.